A 211-amino-acid polypeptide reads, in one-letter code: Thymidylate kinase (211 aa).

Gly-7–Ser-14 serves as a coordination point for ATP.

The protein belongs to the thymidylate kinase family.

It carries out the reaction dTMP + ATP = dTDP + ADP. Its function is as follows. Phosphorylation of dTMP to form dTDP in both de novo and salvage pathways of dTTP synthesis. The chain is Thymidylate kinase from Chlamydia abortus (strain DSM 27085 / S26/3) (Chlamydophila abortus).